The following is a 513-amino-acid chain: Probable DNA primase large subunit (513 aa).

[4Fe-4S] cluster contacts are provided by Cys-315, Cys-398, Cys-415, and Cys-457.

This sequence belongs to the eukaryotic-type primase large subunit family. In terms of assembly, heterodimer of a small subunit and a large subunit. The cofactor is [4Fe-4S] cluster.

DNA primase is the polymerase that synthesizes small RNA primers for the Okazaki fragments made during discontinuous DNA replication. This Neurospora crassa (strain ATCC 24698 / 74-OR23-1A / CBS 708.71 / DSM 1257 / FGSC 987) protein is Probable DNA primase large subunit.